Reading from the N-terminus, the 462-residue chain is WD repeat-containing protein WRAP73 (462 aa).

4 WD repeats span residues 46–86, 89–129, 176–210, and 221–260; these read TCLD…WHCK, EGSA…VSYI, TDTQDLTGIEWAPNGCVLAAWDTCLEYKVLLYSLD, and EWSLGIKSVAWSPSSQFLAIGSYDGKVRLLNHVTWKMITE. S281 carries the post-translational modification Phosphoserine. 2 WD repeats span residues 328 to 369 and 371 to 410; these read NPRM…LFVV and EHMSPVRSFQWDPQQPRLAICTGGSKVYLWSPAGCVSVQV.

As to quaternary structure, interacts with SSX2IP. As to expression, ubiquitous.

It is found in the cytoplasm. The protein resides in the cytoskeleton. It localises to the microtubule organizing center. Its subcellular location is the centrosome. In terms of biological role, the SSX2IP:WRAP73 complex is proposed to act as regulator of spindle anchoring at the mitotic centrosome. Required for the centrosomal localization of SSX2IP and normal mitotic bipolar spindle morphology. Required for the targeting of centriole satellite proteins to centrosomes such as of PCM1, SSX2IP, CEP290 and PIBF1/CEP90. Required for ciliogenesis and involved in the removal of the CEP97:CCP110 complex from the mother centriole. Involved in ciliary vesicle formation at the mother centriole and required for the docking of vesicles to the basal body during ciliogenesis; may promote docking of RAB8A- and ARL13B-containing vesicles. In Mus musculus (Mouse), this protein is WD repeat-containing protein WRAP73 (Wrap73).